The sequence spans 573 residues: Zinc finger protein 10 (573 aa).

The KRAB domain maps to 14–85; that stretch reads VTFKDVFVDF…EREIHQETHP (72 aa). A C2H2-type 1; atypical zinc finger spans residues 206-232; sequence DSCASNSNECGQTFCQNIHLIQFARTH. 9 consecutive C2H2-type zinc fingers follow at residues 265 to 287, 293 to 315, 321 to 343, 349 to 371, 377 to 399, 405 to 427, 433 to 455, 461 to 483, and 489 to 511; these read YECK…QLIH, YECK…QKTH, YECK…QRTH, YTCN…QRTH, YECP…QRTH, YECN…HRIH, FECK…QRTH, YECH…QRIH, and YECC…QRIH. A C2H2-type 11; atypical zinc finger spans residues 517 to 539; that stretch reads YKCNQCGIIFSQNSPFIVHQIAH.

This sequence belongs to the krueppel C2H2-type zinc-finger protein family. Interacts (via the KRAB domain) with TRIM28 (via the RBCC domain).

The protein localises to the nucleus. Its function is as follows. May be involved in transcriptional regulation. This is Zinc finger protein 10 (ZNF10) from Homo sapiens (Human).